The sequence spans 343 residues: Methionine synthase (343 aa).

The Zn(2+) site is built by histidine 211, cysteine 213, glutamate 236, and cysteine 315.

Belongs to the archaeal MetE family. Zn(2+) serves as cofactor.

It participates in amino-acid biosynthesis; L-methionine biosynthesis via de novo pathway. Functionally, catalyzes the transfer of a methyl group to L-homocysteine resulting in methionine formation. The physiological methyl donor is unknown. This is Methionine synthase from Thermoplasma acidophilum (strain ATCC 25905 / DSM 1728 / JCM 9062 / NBRC 15155 / AMRC-C165).